A 319-amino-acid polypeptide reads, in one-letter code: GTP cyclohydrolase MptA (319 aa).

The protein belongs to the GTP cyclohydrolase IV family. In terms of assembly, homodimer. The cofactor is Fe(2+).

The catalysed reaction is GTP + H2O = 7,8-dihydroneopterin 2',3'-cyclic phosphate + formate + diphosphate + H(+). The protein operates within cofactor biosynthesis; 5,6,7,8-tetrahydromethanopterin biosynthesis. In terms of biological role, converts GTP to 7,8-dihydro-D-neopterin 2',3'-cyclic phosphate, the first intermediate in the biosynthesis of coenzyme methanopterin. The sequence is that of GTP cyclohydrolase MptA from Methanosarcina barkeri (strain Fusaro / DSM 804).